Consider the following 266-residue polypeptide: 3-methyl-2-oxobutanoate hydroxymethyltransferase (266 aa).

Positions 43 and 82 each coordinate Mg(2+). Residues 43–44 (DS), aspartate 82, and lysine 110 contribute to the 3-methyl-2-oxobutanoate site. Glutamate 112 contacts Mg(2+). Glutamate 179 acts as the Proton acceptor in catalysis.

The protein belongs to the PanB family. As to quaternary structure, homodecamer; pentamer of dimers. Mg(2+) is required as a cofactor.

The protein localises to the cytoplasm. It carries out the reaction 3-methyl-2-oxobutanoate + (6R)-5,10-methylene-5,6,7,8-tetrahydrofolate + H2O = 2-dehydropantoate + (6S)-5,6,7,8-tetrahydrofolate. Its pathway is cofactor biosynthesis; (R)-pantothenate biosynthesis; (R)-pantoate from 3-methyl-2-oxobutanoate: step 1/2. Its function is as follows. Catalyzes the reversible reaction in which hydroxymethyl group from 5,10-methylenetetrahydrofolate is transferred onto alpha-ketoisovalerate to form ketopantoate. This Psychrobacter arcticus (strain DSM 17307 / VKM B-2377 / 273-4) protein is 3-methyl-2-oxobutanoate hydroxymethyltransferase.